We begin with the raw amino-acid sequence, 468 residues long: 23S rRNA (uracil(1939)-C(5))-methyltransferase RlmD (468 aa).

The TRAM domain occupies 12–70 (SKQLSPKLSLNVTQLDHLGAGMAQHQGKVVFIPQALPGERVSVQLTDQKKSFAKAKLIK). C83, C89, C92, and C174 together coordinate [4Fe-4S] cluster. Positions 296, 325, 330, 351, 378, and 398 each coordinate S-adenosyl-L-methionine. Catalysis depends on C424, which acts as the Nucleophile.

Belongs to the class I-like SAM-binding methyltransferase superfamily. RNA M5U methyltransferase family. RlmD subfamily.

The enzyme catalyses uridine(1939) in 23S rRNA + S-adenosyl-L-methionine = 5-methyluridine(1939) in 23S rRNA + S-adenosyl-L-homocysteine + H(+). Its function is as follows. Catalyzes the formation of 5-methyl-uridine at position 1939 (m5U1939) in 23S rRNA. This is 23S rRNA (uracil(1939)-C(5))-methyltransferase RlmD from Shewanella denitrificans (strain OS217 / ATCC BAA-1090 / DSM 15013).